Here is a 252-residue protein sequence, read N- to C-terminus: Eukaryotic translation initiation factor 3 subunit J (252 aa).

Disordered stretches follow at residues 24-107 and 209-232; these read VPAG…TPEE and KQSK…TMKD. The span at 36 to 56 shows a compositional bias: acidic residues; it reads EDEEDDVKDNWDDEEEEEEVK. Over residues 57 to 107 the composition is skewed to basic and acidic residues; it reads EAEVKQEPKVSEKKKIAEKIKEKEKQQKKKQEELKKRLEAPEEHKELTPEE. Residues 65 to 130 adopt a coiled-coil conformation; that stretch reads KVSEKKKIAE…ESDLELAKET (66 aa).

The protein belongs to the eIF-3 subunit J family. Component of the eukaryotic translation initiation factor 3 (eIF-3) complex, which is composed of 13 subunits: EIF3A, EIF3B, EIF3C, EIF3D, EIF3E, EIF3F, EIF3G, EIF3H, EIF3I, EIF3J, EIF3K, EIF3L and EIF3M.

The protein localises to the cytoplasm. Functionally, component of the eukaryotic translation initiation factor 3 (eIF-3) complex, which is involved in protein synthesis of a specialized repertoire of mRNAs and, together with other initiation factors, stimulates binding of mRNA and methionyl-tRNAi to the 40S ribosome. The eIF-3 complex specifically targets and initiates translation of a subset of mRNAs involved in cell proliferation. The chain is Eukaryotic translation initiation factor 3 subunit J from Gallus gallus (Chicken).